Here is a 778-residue protein sequence, read N- to C-terminus: Probable potassium transporter 13 (778 aa).

The Cytoplasmic portion of the chain corresponds to 1 to 28; the sequence is MDVEGGGGGGGGAPPRGRNSWGWQKGTL. A helical membrane pass occupies residues 29-49; it reads LLAYQSFGVVYGDLCISPVYV. Residues 50–72 are Extracellular-facing; sequence YKNTFSGKLRLHEEDEEILGVLS. Residues 73 to 93 form a helical membrane-spanning segment; it reads LVFWSLTLIPLLKYIILVLGA. The Cytoplasmic portion of the chain corresponds to 94–156; it reads DDNGEGGTFA…AFFEKHYSLR (63 aa). Residues 157-177 traverse the membrane as a helical segment; it reads VVLLLFVLMGTSMVIGDGVLT. At 178-199 the chain is on the extracellular side; the sequence is PTMSVLAAVSGLRIKFPELHEN. An N-linked (GlcNAc...) asparagine glycan is attached at asparagine 199. Residues 200 to 220 traverse the membrane as a helical segment; sequence YTVLLACVILIGLFALQHYGT. Topologically, residues 221-222 are cytoplasmic; that stretch reads RR. A helical transmembrane segment spans residues 223-243; it reads VGFLFAPILISWLTCIGGIGI. Residues 244–276 are Extracellular-facing; the sequence is YNIIKWNPSVIRALSPYYIYNFFRKAGKDGWSS. Residues 277-297 form a helical membrane-spanning segment; it reads LGGIVLCLTGAEAMFADLGHF. Topologically, residues 298-303 are cytoplasmic; that stretch reads SKLSLR. Residues 304–324 form a helical membrane-spanning segment; it reads LGFTIVVYPCLVLAYMGEAAY. Residues 325–343 are Extracellular-facing; sequence LSKHREDLQSSFYKALPDR. Residues 344–364 traverse the membrane as a helical segment; it reads VFWPVLFIATLATAVGSQAII. Residues 365 to 395 lie on the Cytoplasmic side of the membrane; that stretch reads SATFSIISQCRALGCFPRIKVVHTSSHVHGQ. Residues 396 to 416 form a helical membrane-spanning segment; it reads IYIPEVNWVLMSLCLAVTIGF. Residues 417–424 lie on the Extracellular side of the membrane; it reads RDTEMIGN. The chain crosses the membrane as a helical span at residues 425-445; that stretch reads AYGLAVILVMCATTCLMFLVI. At 446 to 451 the chain is on the cytoplasmic side; that stretch reads TTVWNR. Residues 452-472 traverse the membrane as a helical segment; sequence WVVWAAAFTVVFGSVELLYLS. Over 473 to 477 the chain is Extracellular; it reads ACLAK. The chain crosses the membrane as a helical span at residues 478-498; that stretch reads VPHGGWLPLLLSLTTLLVMST. The Cytoplasmic segment spans residues 499-778; that stretch reads WHYGTAMKQQ…LIEVGMAYRV (280 aa). A compositionally biased stretch (polar residues) spans 655–677; that stretch reads PATSSSGGSNQHAFDAGTTTSSC. Residues 655–704 are disordered; the sequence is PATSSSGGSNQHAFDAGTTTSSCEIDATAGGGGRRKVRFDNDGGGGGEEE.

This sequence belongs to the HAK/KUP transporter (TC 2.A.72.3) family.

The protein resides in the membrane. Its function is as follows. High-affinity potassium transporter. In Oryza sativa subsp. japonica (Rice), this protein is Probable potassium transporter 13 (HAK13).